Consider the following 1433-residue polypeptide: DNA-directed RNA polymerase subunit beta' (1433 aa).

Zn(2+) contacts are provided by cysteine 60, cysteine 62, cysteine 75, and cysteine 78. The Mg(2+) site is built by aspartate 449, aspartate 451, and aspartate 453. The Zn(2+) site is built by cysteine 777, cysteine 851, cysteine 858, and cysteine 861. Composition is skewed to acidic residues over residues aspartate 1383 to glutamate 1393 and glutamate 1411 to aspartate 1433. Residues aspartate 1383 to aspartate 1433 are disordered.

It belongs to the RNA polymerase beta' chain family. As to quaternary structure, the RNAP catalytic core consists of 2 alpha, 1 beta, 1 beta' and 1 omega subunit. When a sigma factor is associated with the core the holoenzyme is formed, which can initiate transcription. It depends on Mg(2+) as a cofactor. The cofactor is Zn(2+).

The catalysed reaction is RNA(n) + a ribonucleoside 5'-triphosphate = RNA(n+1) + diphosphate. DNA-dependent RNA polymerase catalyzes the transcription of DNA into RNA using the four ribonucleoside triphosphates as substrates. This Leptospira biflexa serovar Patoc (strain Patoc 1 / Ames) protein is DNA-directed RNA polymerase subunit beta'.